We begin with the raw amino-acid sequence, 261 residues long: 5'-nucleotidase SurE (261 aa).

Residues Asp-8, Asp-9, Ser-43, and Asn-96 each contribute to the a divalent metal cation site.

Belongs to the SurE nucleotidase family. Requires a divalent metal cation as cofactor.

It is found in the cytoplasm. It catalyses the reaction a ribonucleoside 5'-phosphate + H2O = a ribonucleoside + phosphate. Nucleotidase that shows phosphatase activity on nucleoside 5'-monophosphates. In Cereibacter sphaeroides (strain ATCC 17025 / ATH 2.4.3) (Rhodobacter sphaeroides), this protein is 5'-nucleotidase SurE.